We begin with the raw amino-acid sequence, 554 residues long: Putative F-box/LRR-repeat protein 8 (554 aa).

Positions tyrosine 71–leucine 117 constitute an F-box domain. LRR repeat units follow at residues alanine 119–serine 144, serine 148–glycine 173, cysteine 174–serine 199, lysine 205–arginine 224, lysine 250–arginine 275, arginine 301–lysine 325, threonine 326–glycine 351, threonine 354–glycine 379, threonine 383–glycine 404, serine 405–isoleucine 428, asparagine 430–lysine 455, and cysteine 456–alanine 480.

In Arabidopsis thaliana (Mouse-ear cress), this protein is Putative F-box/LRR-repeat protein 8 (FBL8).